The sequence spans 220 residues: Putative pyrophosphatase PpaX (220 aa).

The active-site Nucleophile is aspartate 9.

It belongs to the HAD-like hydrolase superfamily. PpaX family. Mg(2+) serves as cofactor.

It catalyses the reaction diphosphate + H2O = 2 phosphate + H(+). In Caldanaerobacter subterraneus subsp. tengcongensis (strain DSM 15242 / JCM 11007 / NBRC 100824 / MB4) (Thermoanaerobacter tengcongensis), this protein is Putative pyrophosphatase PpaX.